A 339-amino-acid polypeptide reads, in one-letter code: Phenylalanine--tRNA ligase alpha subunit (339 aa).

Residue E254 coordinates Mg(2+).

Belongs to the class-II aminoacyl-tRNA synthetase family. Phe-tRNA synthetase alpha subunit type 1 subfamily. Tetramer of two alpha and two beta subunits. Requires Mg(2+) as cofactor.

The protein localises to the cytoplasm. The enzyme catalyses tRNA(Phe) + L-phenylalanine + ATP = L-phenylalanyl-tRNA(Phe) + AMP + diphosphate + H(+). In Clostridium kluyveri (strain ATCC 8527 / DSM 555 / NBRC 12016 / NCIMB 10680 / K1), this protein is Phenylalanine--tRNA ligase alpha subunit.